Reading from the N-terminus, the 271-residue chain is Formamidopyrimidine-DNA glycosylase (271 aa).

Pro-2 acts as the Schiff-base intermediate with DNA in catalysis. Catalysis depends on Glu-3, which acts as the Proton donor. Lys-58 functions as the Proton donor; for beta-elimination activity in the catalytic mechanism. DNA is bound by residues His-91, Arg-110, and Arg-152. Residues 237–271 form an FPG-type zinc finger; that stretch reads SIYGKKGRPCPKCGSAIRMMRLGGRSTFFCPLCQK. The Proton donor; for delta-elimination activity role is filled by Arg-261.

Belongs to the FPG family. As to quaternary structure, monomer. It depends on Zn(2+) as a cofactor.

It carries out the reaction Hydrolysis of DNA containing ring-opened 7-methylguanine residues, releasing 2,6-diamino-4-hydroxy-5-(N-methyl)formamidopyrimidine.. The enzyme catalyses 2'-deoxyribonucleotide-(2'-deoxyribose 5'-phosphate)-2'-deoxyribonucleotide-DNA = a 3'-end 2'-deoxyribonucleotide-(2,3-dehydro-2,3-deoxyribose 5'-phosphate)-DNA + a 5'-end 5'-phospho-2'-deoxyribonucleoside-DNA + H(+). Involved in base excision repair of DNA damaged by oxidation or by mutagenic agents. Acts as a DNA glycosylase that recognizes and removes damaged bases. Has a preference for oxidized purines, such as 7,8-dihydro-8-oxoguanine (8-oxoG). Has AP (apurinic/apyrimidinic) lyase activity and introduces nicks in the DNA strand. Cleaves the DNA backbone by beta-delta elimination to generate a single-strand break at the site of the removed base with both 3'- and 5'-phosphates. The chain is Formamidopyrimidine-DNA glycosylase from Geotalea daltonii (strain DSM 22248 / JCM 15807 / FRC-32) (Geobacter daltonii).